A 113-amino-acid chain; its full sequence is Large ribosomal subunit protein bL19 (113 aa).

This sequence belongs to the bacterial ribosomal protein bL19 family.

In terms of biological role, this protein is located at the 30S-50S ribosomal subunit interface and may play a role in the structure and function of the aminoacyl-tRNA binding site. The chain is Large ribosomal subunit protein bL19 from Mycobacterium avium (strain 104).